Reading from the N-terminus, the 322-residue chain is uncharacterized protein (322 aa).

The interval 174–207 (LQSRPTEGAKVSTNGRGFSSRPTGEGNFFGPKGR) is disordered. Residues 184 to 195 (VSTNGRGFSSRP) are compositionally biased toward polar residues.

The protein resides in the mitochondrion. This is an uncharacterized protein from Marchantia polymorpha (Common liverwort).